Consider the following 694-residue polypeptide: E3 ubiquitin-protein ligase RNF169 (694 aa).

Composition is skewed to low complexity over residues 1–20 and 33–46; these read MAAAGPSTRASSAAAAAALS and AAKAGAPGPASSPA. The interval 1-46 is disordered; sequence MAAAGPSTRASSAAAAAALSRRGRRGRCDEMAAAKAGAPGPASSPA. Ser12 carries the phosphoserine modification. The RING-type zinc finger occupies 61–97; it reads CTGCLETPGEVAALPCSHSRCRGCASRAAGPGCRRCR. The segment at 100 to 153 is disordered; that stretch reads GSGWARRRARDDGQAAAELMGERARRGQPEPCRPRRDGGAAASGPRPEPEPLAE. Residues 119–137 are compositionally biased toward basic and acidic residues; the sequence is MGERARRGQPEPCRPRRDG. Positions 192-200 match the UMI motif motif; that stretch reads DDQIHKLLQ. Ser234 and Ser236 each carry phosphoserine. Lys273 is covalently cross-linked (Glycyl lysine isopeptide (Lys-Gly) (interchain with G-Cter in SUMO2)). Position 326 is a phosphoserine (Ser326). Residue Lys349 forms a Glycyl lysine isopeptide (Lys-Gly) (interchain with G-Cter in SUMO2) linkage. Phosphoserine occurs at positions 390 and 396. A Phosphothreonine modification is found at Thr397. Ser472 carries the phosphoserine modification. A Glycyl lysine isopeptide (Lys-Gly) (interchain with G-Cter in SUMO2) cross-link involves residue Lys498. The interval 515-537 is disordered; the sequence is TCHSSEHGGASSGPSLEREQCEE. A Phosphothreonine modification is found at Thr541. Ser630 is subject to Phosphoserine. Positions 651–668 match the MIU motif motif; it reads QEEEDQQLALQSHRMFDS. The short motif at 675–687 is the LR motif element; the sequence is RRKGSVDQYLLRS. Ser679 is modified (phosphoserine).

Belongs to the RNF169 family. In terms of assembly, interacts with DYRK1B. Phosphorylated by DYRK1A; phosphorylation increases RNF169 ability to block accumulation of TP53BP1 at the DSB sites.

Its subcellular location is the chromosome. It is found in the nucleus. The protein resides in the nucleoplasm. The enzyme catalyses S-ubiquitinyl-[E2 ubiquitin-conjugating enzyme]-L-cysteine + [acceptor protein]-L-lysine = [E2 ubiquitin-conjugating enzyme]-L-cysteine + N(6)-ubiquitinyl-[acceptor protein]-L-lysine.. Its pathway is protein modification; protein ubiquitination. Its function is as follows. Probable E3 ubiquitin-protein ligase that acts as a regulator of double-strand breaks (DSBs) repair following DNA damage. Functions in a non-canonical fashion to harness RNF168-mediated protein recruitment to DSB-containing chromatin, thereby contributing to regulation of DSB repair pathway utilization. Once recruited to DSB repair sites by recognizing and binding ubiquitin catalyzed by RNF168, competes with TP53BP1 and BRCA1 for association with RNF168-modified chromatin, thereby favouring homologous recombination repair (HRR) and single-strand annealing (SSA) instead of non-homologous end joining (NHEJ) mediated by TP53BP1. E3 ubiquitin-protein ligase activity is not required for regulation of DSBs repair. The sequence is that of E3 ubiquitin-protein ligase RNF169 (Rnf169) from Mus musculus (Mouse).